Consider the following 292-residue polypeptide: General transcription factor IIE subunit 2 (292 aa).

The residue at position 1 (methionine 1) is an N-acetylmethionine. The tract at residues 17–64 (LSTPVVEKRAVPSESPSSSSSKKKKAKVEHGGSSGSKQNSDHNNGSFN) is disordered. The segment covering 51–63 (GSKQNSDHNNGSF) has biased composition (polar residues). Residue serine 62 is modified to Phosphoserine. Positions 67–147 (ALSGSSGYKF…YAFKPKYNLK (81 aa)) form a DNA-binding region, TFIIE beta. Residue lysine 75 is modified to N6-acetyllysine. A disordered region spans residues 245–277 (SMQESGPKKVASIQRRKKPASQKKRRFKTHNEH). The span at 258 to 272 (QRRKKPASQKKRRFK) shows a compositional bias: basic residues.

It belongs to the TFIIE beta subunit family. As to quaternary structure, tetramer of two alpha and two beta chains. Interacts with FACT subunit SUPT16H. Interacts with ATF7IP. Interacts with SND1. Part of TBP-based Pol II pre-initiation complex (PIC), in which Pol II core assembles with general transcription factors and other specific initiation factors including GTF2E1, GTF2E2, GTF2F1, GTF2F2, TCEA1, ERCC2, ERCC3, GTF2H2, GTF2H3, GTF2H4, GTF2H5, GTF2A1, GTF2A2, GTF2B and TBP; this large multi-subunit PIC complex mediates DNA unwinding and targets Pol II core to the transcription start site where the first phosphodiester bond forms.

Its subcellular location is the nucleus. Recruits TFIIH to the initiation complex and stimulates the RNA polymerase II C-terminal domain kinase and DNA-dependent ATPase activities of TFIIH. Both TFIIH and TFIIE are required for promoter clearance by RNA polymerase. The sequence is that of General transcription factor IIE subunit 2 (Gtf2e2) from Mus musculus (Mouse).